A 381-amino-acid chain; its full sequence is 2-methylcitrate synthase 1 (381 aa).

Residue His-192 participates in substrate binding. The active site involves His-227. A CoA-binding site is contributed by 260-264 (RIMGF). The active site involves His-266. Arg-275 contributes to the substrate binding site. The active site involves Asp-317. 2 residues coordinate substrate: Arg-342 and Arg-361.

Belongs to the citrate synthase family. In terms of assembly, homodimer.

The enzyme catalyses propanoyl-CoA + oxaloacetate + H2O = (2S,3S)-2-methylcitrate + CoA + H(+). It catalyses the reaction oxaloacetate + acetyl-CoA + H2O = citrate + CoA + H(+). It participates in carbohydrate metabolism; tricarboxylic acid cycle. Its function is as follows. Catalyzes the Claisen condensation of propionyl-CoA and oxaloacetate (OAA) to yield 2-methylcitrate (2-MC) and CoA. Also catalyzes the condensation of oxaloacetate with propionyl-CoA but with a lower specificity. The sequence is that of 2-methylcitrate synthase 1 (prpC1) from Corynebacterium glutamicum (strain ATCC 13032 / DSM 20300 / JCM 1318 / BCRC 11384 / CCUG 27702 / LMG 3730 / NBRC 12168 / NCIMB 10025 / NRRL B-2784 / 534).